We begin with the raw amino-acid sequence, 116 residues long: U16-barytoxin-Tl1b (116 aa).

The first 20 residues, 1 to 20, serve as a signal peptide directing secretion; it reads MKTIIVFLSLLVLATKFGDA. Positions 21 to 74 are excised as a propeptide; it reads KEGVNQKQKKEVTQNEFREEYLNEMAAMSLVQQLEAIERALFENEAGRNSRQKR. Disulfide bonds link Cys75/Cys90, Cys82/Cys95, and Cys89/Cys110.

This sequence belongs to the neurotoxin 14 (magi-1) family. 06 (ICK-Trit) subfamily. Expressed by the venom gland.

It localises to the secreted. Ion channel inhibitor. This is U16-barytoxin-Tl1b from Trittame loki (Brush-footed trapdoor spider).